Consider the following 25-residue polypeptide: Flagellar filament core protein flaB3 (25 aa).

This sequence belongs to the bacterial flagellin family. As to quaternary structure, the flagellum consists of an outer layer composed of two sheath proteins, flaA1 (44 kDa) and flaA2 (35 kDa) around a core that contains three proteins flaB1 (37 kDa), flaB2 (34 kDa) and flaB3 (32 kDa).

The protein localises to the periplasmic flagellum. The protein resides in the periplasm. Functionally, component of the core of the flagella. In Brachyspira hyodysenteriae (Treponema hyodysenteriae), this protein is Flagellar filament core protein flaB3 (flaB3).